Consider the following 223-residue polypeptide: Killer cell lectin-like receptor subfamily B member 1B allele A (223 aa).

Residues 1-43 (MDSTTLVYADLNLARIQEPKHDSPPSLSPDTCRCPRWHRLALK) lie on the Cytoplasmic side of the membrane. An ITIM motif motif is present at residues 6–11 (LVYADL). An LCK-binding motif motif is present at residues 32–35 (CRCP). A helical; Signal-anchor for type II membrane protein transmembrane segment spans residues 44 to 63 (FGCAGLILLVLVVIGLCVLV). At 64–223 (LSVQKSSVQK…LNHETPSNDS (160 aa)) the chain is on the extracellular side. One can recognise a C-type lectin domain in the interval 93–212 (ECPQDWLSHR…STDNRWICQK (120 aa)). 2 cysteine pairs are disulfide-bonded: Cys-122–Cys-210 and Cys-189–Cys-202.

As to quaternary structure, homodimer; disulfide-linked. Interacts with tyrosine kinase LCK. Binds PTPN6/SHP-1 in a phosphorylation-dependent manner. In terms of tissue distribution, expressed in NK cells and a subset of T-cells.

Its subcellular location is the membrane. In terms of biological role, receptor for CLEC2D/OCIL. Ligand-binding contributes to inhibition of cytotoxic natural killer (NK) cells. May mediate MHC class I-independent 'missing-self' recognition of allografts, tumor cells and virus-infected cells. The sequence is that of Killer cell lectin-like receptor subfamily B member 1B allele A (Klrb1b) from Mus musculus (Mouse).